Consider the following 339-residue polypeptide: Glycerol-3-phosphate dehydrogenase [NAD(P)+] (339 aa).

S15, Y16, H36, and K110 together coordinate NADPH. Positions 110, 139, and 141 each coordinate sn-glycerol 3-phosphate. A143 contributes to the NADPH binding site. 5 residues coordinate sn-glycerol 3-phosphate: K195, D248, S258, R259, and N260. The active-site Proton acceptor is the K195. R259 provides a ligand contact to NADPH. Positions 283 and 285 each coordinate NADPH.

This sequence belongs to the NAD-dependent glycerol-3-phosphate dehydrogenase family.

It is found in the cytoplasm. It catalyses the reaction sn-glycerol 3-phosphate + NAD(+) = dihydroxyacetone phosphate + NADH + H(+). The enzyme catalyses sn-glycerol 3-phosphate + NADP(+) = dihydroxyacetone phosphate + NADPH + H(+). Its pathway is membrane lipid metabolism; glycerophospholipid metabolism. Functionally, catalyzes the reduction of the glycolytic intermediate dihydroxyacetone phosphate (DHAP) to sn-glycerol 3-phosphate (G3P), the key precursor for phospholipid synthesis. This Erwinia tasmaniensis (strain DSM 17950 / CFBP 7177 / CIP 109463 / NCPPB 4357 / Et1/99) protein is Glycerol-3-phosphate dehydrogenase [NAD(P)+].